A 465-amino-acid chain; its full sequence is MRRAAGMEDYSAEEEESWYDHQDLEQDLHLAAELGKTLLERNKELEESLQQMYSTNEEQVHEIEYLTKQLDTLRLVNEQHAKVYEQLDLTARDLELTNQRLVMESKAAQQKIHGLTETIERLQSQVEELQAQVEQLRGLEQLRIRREKRERRRTIHTFPCLKELCTSSRCEDAFRLHSSSLELGPRPLEQENERLQTLVGVLRSQVSQERQRKERAEREYTVVLQEYTELERQLCEMEGCRLRVQELEAELLELQQMKQAKTYLLAREEHLAEALLAPLTQAPEADDPQPGSGDDSNAQDGVSSPAASPSHAVRKSCSDTALNAIVAKDPASRHAGNLTLHANSVRRRGMSILREVDEQYHALLEKYEELLSKCRQHGAGVRHAGVQTSRPISRDSSWRDLLGGEESPGEGKAGEKSLSQHVEAVDKRLEQSQPEYKALFKEIFARIQKTKADINATKVKTHSSK.

Coiled coils occupy residues Ala31 to Glu64, Ala91 to Leu142, and Leu188 to Ala266. A disordered region spans residues Ala282–Lys315. Phosphoserine is present on residues Ser308, Ser318, and Ser344. Residues Met350 to His377 are a coiled coil. The disordered stretch occupies residues Arg382 to His421. Ser407 carries the post-translational modification Phosphoserine.

This sequence belongs to the CDR2 family.

The chain is Cerebellar degeneration-related protein 2-like (Cdr2l) from Mus musculus (Mouse).